The chain runs to 245 residues: tRNA (guanine-N(7)-)-methyltransferase (245 aa).

S-adenosyl-L-methionine-binding residues include E75, E100, D127, and D149. The active site involves D149. Residues K153, D185, and 222–225 (TKFE) each bind substrate.

The protein belongs to the class I-like SAM-binding methyltransferase superfamily. TrmB family.

It carries out the reaction guanosine(46) in tRNA + S-adenosyl-L-methionine = N(7)-methylguanosine(46) in tRNA + S-adenosyl-L-homocysteine. It functions in the pathway tRNA modification; N(7)-methylguanine-tRNA biosynthesis. Its function is as follows. Catalyzes the formation of N(7)-methylguanine at position 46 (m7G46) in tRNA. In Acinetobacter baylyi (strain ATCC 33305 / BD413 / ADP1), this protein is tRNA (guanine-N(7)-)-methyltransferase.